A 349-amino-acid chain; its full sequence is MDDLENNIFNSVEEEILYWKSVAMKYKQCSEEAQQELQEFQEASREYEAELEAQLLQTEGRNRDLFSENNRLRMELDAIKEKYEEQHSENYVQISTLEGDLSQTKAVRDQLQKYIRELEQANDDLERAKRATIMSLEDFEQRLNQAIERNAFLENELDEKENLLESVQRLKDEARDLRQELAVQQKQEKPKSNMVSPETERMDTSVQASIAIPSAPLTPLSQRGCASTLTSPLSFRTSLDDGYSGTPLTPCARISALNIVGDLLRKVGALESKLASCRNFVHEQSPNRPLTSVSARMKKTREGIENRLSIASGSSVEKGLIKRLEFGSFPSNTPMQGMHSPQGVVKMII.

Positions 22 to 189 (VAMKYKQCSE…ELAVQQKQEK (168 aa)) form a coiled coil.

Belongs to the nudE family. Self-associates. Interacts with pafah1b1. In terms of processing, phosphorylated in mitosis.

It localises to the cytoplasm. It is found in the cytoskeleton. The protein localises to the microtubule organizing center. The protein resides in the centrosome. Its subcellular location is the spindle. It localises to the chromosome. It is found in the centromere. The protein localises to the kinetochore. The protein resides in the cleavage furrow. Its subcellular location is the cytoplasmic vesicle membrane. Functionally, required for centrosome duplication and formation and function of the mitotic spindle. The chain is Nuclear distribution protein nudE homolog 1-A (nde1-a) from Xenopus laevis (African clawed frog).